We begin with the raw amino-acid sequence, 456 residues long: MGEKAKANVLVFSFPIQGHINPLLQFSKRLLSKNVNVTFLTTSSTHNSILRRAITGGATALPLSFVPIDDGFEEDHPSTDTSPDYFAKFQENVSRSLSELISSMDPKPNAVVYDSCLPYVLDVCRKHPGVAAASFFTQSSTVNATYIHFLRGEFKEFQNDVVLPAMPPLKGNDLPVFLYDNNLCRPLFELISSQFVNVDDIDFFLVNSFDELEVEVLQWMKNQWPVKNIGPMIPSMYLDKRLAGDKDYGINLFNAQVNECLDWLDSKPPGSVIYVSFGSLAVLKDDQMIEVAAGLKQTGHNFLWVVRETETKKLPSNYIEDICDKGLIVNWSPQLQVLAHKSIGCFMTHCGWNSTLEALSLGVALIGMPAYSDQPTNAKFIEDVWKVGVRVKADQNGFVPKEEIVRCVGEVMEDMSEKGKEIRKNARRLMEFAREALSDGGNSDKNIDEFVAKIVR.

UDP-alpha-D-glucose contacts are provided by residues Ser-279, 332–334, 349–357, and 371–374; these read SPQ, HCGWNSTLE, and YSDQ.

The protein belongs to the UDP-glycosyltransferase family. Expressed in leaves.

Its function is as follows. Glucosyltransferase that glucosylates jasmonate (JA) and JA derivatives. Also active on indole-3-acetic acid (IAA), 4-coumrate, cinnamate and caffeate. The polypeptide is UDP-glycosyltransferase 74D1 (UGT74D1) (Arabidopsis thaliana (Mouse-ear cress)).